The following is a 43-amino-acid chain: Phi-Lf prophage-derived putative minor coat protein (43 aa).

This chain is Phi-Lf prophage-derived putative minor coat protein (gVII-1), found in Xanthomonas campestris pv. campestris (strain ATCC 33913 / DSM 3586 / NCPPB 528 / LMG 568 / P 25).